A 661-amino-acid chain; its full sequence is FAST kinase domain-containing protein 3, mitochondrial (661 aa).

The region spanning 592–650 (VALCIDGPQRFCLDSKHLLGKEATKQRHLRLLGYQVVQLPYHELELLTSRLELVDYLQR) is the RAP domain.

This sequence belongs to the FAST kinase family. Expression detected in spleen, testis, colon, heart, smooth muscle, kidney, brain, lung, liver, brown and white adipose tissue with highest expression in testis and smooth muscle.

It localises to the mitochondrion. Required for normal mitochondrial respiration. Increases steady-state levels and half-lives of a subset of mature mitochondrial mRNAs MT-ND2, MT-ND3, MT-CYTB, MT-CO2, and MT-ATP8/6. Promotes MT-CO1 mRNA translation and increases mitochondrial complex IV assembly and activity. This Mus musculus (Mouse) protein is FAST kinase domain-containing protein 3, mitochondrial (Fastkd3).